A 360-amino-acid chain; its full sequence is uncharacterized protein (360 aa).

The interval Ser193–Glu245 is disordered. 2 stretches are compositionally biased toward polar residues: residues Pro202 to Ser212 and Arg225 to Glu241.

This is an uncharacterized protein from Homo sapiens (Human).